Reading from the N-terminus, the 350-residue chain is Phosphotriesterase-related protein (350 aa).

A divalent metal cation-binding residues include H22, H24, E169, H201, H230, and D298.

This sequence belongs to the metallo-dependent hydrolases superfamily. Phosphotriesterase family. It depends on a divalent metal cation as a cofactor.

The protein is Phosphotriesterase-related protein of Drosophila mojavensis (Fruit fly).